A 350-amino-acid chain; its full sequence is Phenylalanine--tRNA ligase alpha subunit (350 aa).

A Mg(2+)-binding site is contributed by glutamate 271.

The protein belongs to the class-II aminoacyl-tRNA synthetase family. Phe-tRNA synthetase alpha subunit type 1 subfamily. As to quaternary structure, tetramer of two alpha and two beta subunits. Requires Mg(2+) as cofactor.

It localises to the cytoplasm. The catalysed reaction is tRNA(Phe) + L-phenylalanine + ATP = L-phenylalanyl-tRNA(Phe) + AMP + diphosphate + H(+). This is Phenylalanine--tRNA ligase alpha subunit from Verminephrobacter eiseniae (strain EF01-2).